We begin with the raw amino-acid sequence, 864 residues long: Translation initiation factor IF-2 (864 aa).

Over residues 140 to 171 (DSRSLNTKKENKLKISNKDEQNKKFNQHRESN) the composition is skewed to basic and acidic residues. Positions 140–179 (DSRSLNTKKENKLKISNKDEQNKKFNQHRESNSFDLNHKK) are disordered. A tr-type G domain is found at 364 to 533 (IRAPVVTIMG…LLQAEMLELK (170 aa)). The G1 stretch occupies residues 373 to 380 (GHVDHGKT). 373–380 (GHVDHGKT) serves as a coordination point for GTP. Residues 398 to 402 (GITQN) form a G2 region. The segment at 419–422 (DTPG) is G3. GTP is bound by residues 419–423 (DTPGH) and 473–476 (NKID). Residues 473–476 (NKID) are G4. Positions 509-511 (SAK) are G5.

Belongs to the TRAFAC class translation factor GTPase superfamily. Classic translation factor GTPase family. IF-2 subfamily.

It localises to the cytoplasm. Its function is as follows. One of the essential components for the initiation of protein synthesis. Protects formylmethionyl-tRNA from spontaneous hydrolysis and promotes its binding to the 30S ribosomal subunits. Also involved in the hydrolysis of GTP during the formation of the 70S ribosomal complex. The chain is Translation initiation factor IF-2 from Buchnera aphidicola subsp. Acyrthosiphon pisum (strain 5A).